The chain runs to 293 residues: MNFVTTLTYLLPHRMLSSLARHVAYCQHPLIKQWLIDTVIAKFDVNLSEAAEPDAHAYPSFNAFFTRSLKTGIRLPDPNPDTLLMPADGRISQLGPIREGRIFQAKGQSFTATELLGDTAAAAAFTNGLFATVYLSPRDYHRVHMPCTGQLLKTVHVPGRLFSVGPDAVRQIPRLFARNERLACHFDTAFGPMVLVMVGALLVSGVETVWGGVEIPAYGDRITHKDYQGRNIAIERFAEMARFNYGSTVIVLLPPNVFTLAPHLTAESPVTLGQALAHRLSLNHSTQAPTQEK.

Active-site charge relay system; for autoendoproteolytic cleavage activity residues include Asp-88, His-144, and Ser-247. Ser-247 serves as the catalytic Schiff-base intermediate with substrate; via pyruvic acid; for decarboxylase activity. At Ser-247 the chain carries Pyruvic acid (Ser); by autocatalysis.

The protein belongs to the phosphatidylserine decarboxylase family. PSD-B subfamily. Prokaryotic type I sub-subfamily. Heterodimer of a large membrane-associated beta subunit and a small pyruvoyl-containing alpha subunit. The cofactor is pyruvate. Is synthesized initially as an inactive proenzyme. Formation of the active enzyme involves a self-maturation process in which the active site pyruvoyl group is generated from an internal serine residue via an autocatalytic post-translational modification. Two non-identical subunits are generated from the proenzyme in this reaction, and the pyruvate is formed at the N-terminus of the alpha chain, which is derived from the carboxyl end of the proenzyme. The autoendoproteolytic cleavage occurs by a canonical serine protease mechanism, in which the side chain hydroxyl group of the serine supplies its oxygen atom to form the C-terminus of the beta chain, while the remainder of the serine residue undergoes an oxidative deamination to produce ammonia and the pyruvoyl prosthetic group on the alpha chain. During this reaction, the Ser that is part of the protease active site of the proenzyme becomes the pyruvoyl prosthetic group, which constitutes an essential element of the active site of the mature decarboxylase.

It localises to the cell membrane. It catalyses the reaction a 1,2-diacyl-sn-glycero-3-phospho-L-serine + H(+) = a 1,2-diacyl-sn-glycero-3-phosphoethanolamine + CO2. The protein operates within phospholipid metabolism; phosphatidylethanolamine biosynthesis; phosphatidylethanolamine from CDP-diacylglycerol: step 2/2. Catalyzes the formation of phosphatidylethanolamine (PtdEtn) from phosphatidylserine (PtdSer). The sequence is that of Phosphatidylserine decarboxylase proenzyme from Xylella fastidiosa (strain 9a5c).